The following is a 371-amino-acid chain: Queuine tRNA-ribosyltransferase (371 aa).

Asp90 serves as the catalytic Proton acceptor. Substrate-binding positions include 90-94 (DSGGF), Asp144, Gln188, and Gly215. The interval 246–252 (GVGTPED) is RNA binding. The active-site Nucleophile is Asp265. The interval 270-274 (TRNAR) is RNA binding; important for wobble base 34 recognition. Cys303, Cys305, Cys308, and His334 together coordinate Zn(2+).

Belongs to the queuine tRNA-ribosyltransferase family. As to quaternary structure, homodimer. Within each dimer, one monomer is responsible for RNA recognition and catalysis, while the other monomer binds to the replacement base PreQ1. The cofactor is Zn(2+).

The enzyme catalyses 7-aminomethyl-7-carbaguanine + guanosine(34) in tRNA = 7-aminomethyl-7-carbaguanosine(34) in tRNA + guanine. Its pathway is tRNA modification; tRNA-queuosine biosynthesis. In terms of biological role, catalyzes the base-exchange of a guanine (G) residue with the queuine precursor 7-aminomethyl-7-deazaguanine (PreQ1) at position 34 (anticodon wobble position) in tRNAs with GU(N) anticodons (tRNA-Asp, -Asn, -His and -Tyr). Catalysis occurs through a double-displacement mechanism. The nucleophile active site attacks the C1' of nucleotide 34 to detach the guanine base from the RNA, forming a covalent enzyme-RNA intermediate. The proton acceptor active site deprotonates the incoming PreQ1, allowing a nucleophilic attack on the C1' of the ribose to form the product. After dissociation, two additional enzymatic reactions on the tRNA convert PreQ1 to queuine (Q), resulting in the hypermodified nucleoside queuosine (7-(((4,5-cis-dihydroxy-2-cyclopenten-1-yl)amino)methyl)-7-deazaguanosine). The chain is Queuine tRNA-ribosyltransferase from Neisseria gonorrhoeae (strain NCCP11945).